The chain runs to 481 residues: Ankyrin repeat, SAM and basic leucine zipper domain-containing protein 1 (481 aa).

Residues 1 to 10 are compositionally biased toward low complexity; the sequence is MASGALRGLA. The tract at residues 1-23 is disordered; it reads MASGALRGLAVAGGGESSDSEDD. Phosphoserine occurs at positions 17, 18, and 20. ANK repeat units lie at residues 45–74, 78–107, 110–144, 148–177, 181–210, and 214–243; these read EKSE…SVDS, YGWT…NASF, DKQT…DPNI, RLMT…EVNA, NGYT…NKML, and DGKI…PLEG. The region spanning 272 to 334 is the SAM domain; it reads SYTAFGDLEI…KILSALKELE (63 aa).

Interacts with DDX4, PIWIL1, RANBP9 and TDRD1.

The protein localises to the cytoplasm. Plays a central role during spermatogenesis by repressing transposable elements and preventing their mobilization, which is essential for the germline integrity. Acts via the piRNA metabolic process, which mediates the repression of transposable elements during meiosis by forming complexes composed of piRNAs and Piwi proteins and governs the methylation and subsequent repression of transposons. Its association with pi-bodies suggests a participation in the primary piRNAs metabolic process. Required prior to the pachytene stage to facilitate the production of multiple types of piRNAs, including those associated with repeats involved in the regulation of retrotransposons. May act by mediating protein-protein interactions during germ cell maturation. The polypeptide is Ankyrin repeat, SAM and basic leucine zipper domain-containing protein 1 (ASZ1) (Eulemur macaco macaco (Black lemur)).